Reading from the N-terminus, the 260-residue chain is FAS1 domain-containing protein SELMODRAFT_448915 (260 aa).

Over 1 to 35 the chain is Cytoplasmic; it reads MRRTGRSYKPLLSQLKDHHIPVHPSSRAERAMESR. Residues 36-58 traverse the membrane as a helical segment; sequence TLLVLLFVGVVTIVSSGLERAAA. The 140-residue stretch at 59–198 folds into the FAS1 domain; the sequence is QDDTDDGILP…IACHGIDRVL (140 aa). The Extracellular portion of the chain corresponds to 59-260; that stretch reads QDDTDDGILP…SSASRYPVSE (202 aa). 6 N-linked (GlcNAc...) asparagine glycosylation sites follow: Asn-118, Asn-169, Asn-176, Asn-201, Asn-236, and Asn-247. The tract at residues 210–260 is disordered; the sequence is PEASPPFGAEQASPAPEALPPGTRSPNNTANPSNRKSNSTRSSASRYPVSE. The span at 233-254 shows a compositional bias: polar residues; it reads RSPNNTANPSNRKSNSTRSSAS.

Its subcellular location is the membrane. In Selaginella moellendorffii (Spikemoss), this protein is FAS1 domain-containing protein SELMODRAFT_448915.